The primary structure comprises 60 residues: Temporin-CG2 (60 aa).

Residues 1 to 22 form the signal peptide; sequence MFTLKKPLLVLFFLATINLSLC. Positions 23-43 are cleaved as a propeptide — removed in mature form; it reads EQERNAEEERRDDDERNVEVE.

In terms of tissue distribution, expressed by the skin glands.

It localises to the secreted. In terms of biological role, antimicrobial peptide active against a variety of Gram-positive bacterial strains but not against Gram-negative bacteria. Has weak antifungal activity against a slime mold isolate. Has weak hemolytic activity against human erythrocytes. The chain is Temporin-CG2 from Amolops chunganensis (Chungan torrent frog).